The primary structure comprises 686 residues: Elongation factor G 2 (686 aa).

Positions 7–280 (TTVRNLGILA…AVVAYLPSPL (274 aa)) constitute a tr-type G domain. GTP is bound by residues 16–23 (AHVDAGKT), 80–84 (DTPGH), and 134–137 (NKMD).

Belongs to the TRAFAC class translation factor GTPase superfamily. Classic translation factor GTPase family. EF-G/EF-2 subfamily.

The protein localises to the cytoplasm. Functionally, catalyzes the GTP-dependent ribosomal translocation step during translation elongation. During this step, the ribosome changes from the pre-translocational (PRE) to the post-translocational (POST) state as the newly formed A-site-bound peptidyl-tRNA and P-site-bound deacylated tRNA move to the P and E sites, respectively. Catalyzes the coordinated movement of the two tRNA molecules, the mRNA and conformational changes in the ribosome. The chain is Elongation factor G 2 (fusB) from Streptomyces coelicolor (strain ATCC BAA-471 / A3(2) / M145).